The sequence spans 100 residues: Urease subunit gamma (100 aa).

This sequence belongs to the urease gamma subunit family. Heterotrimer of UreA (gamma), UreB (beta) and UreC (alpha) subunits. Three heterotrimers associate to form the active enzyme.

The protein resides in the cytoplasm. The catalysed reaction is urea + 2 H2O + H(+) = hydrogencarbonate + 2 NH4(+). Its pathway is nitrogen metabolism; urea degradation; CO(2) and NH(3) from urea (urease route): step 1/1. This Polynucleobacter asymbioticus (strain DSM 18221 / CIP 109841 / QLW-P1DMWA-1) (Polynucleobacter necessarius subsp. asymbioticus) protein is Urease subunit gamma.